Reading from the N-terminus, the 617-residue chain is Proline--tRNA ligase (617 aa).

It belongs to the class-II aminoacyl-tRNA synthetase family. ProS type 1 subfamily. As to quaternary structure, homodimer.

Its subcellular location is the cytoplasm. It catalyses the reaction tRNA(Pro) + L-proline + ATP = L-prolyl-tRNA(Pro) + AMP + diphosphate. Catalyzes the attachment of proline to tRNA(Pro) in a two-step reaction: proline is first activated by ATP to form Pro-AMP and then transferred to the acceptor end of tRNA(Pro). As ProRS can inadvertently accommodate and process non-cognate amino acids such as alanine and cysteine, to avoid such errors it has two additional distinct editing activities against alanine. One activity is designated as 'pretransfer' editing and involves the tRNA(Pro)-independent hydrolysis of activated Ala-AMP. The other activity is designated 'posttransfer' editing and involves deacylation of mischarged Ala-tRNA(Pro). The misacylated Cys-tRNA(Pro) is not edited by ProRS. This chain is Proline--tRNA ligase, found in Streptococcus pneumoniae (strain ATCC 700669 / Spain 23F-1).